We begin with the raw amino-acid sequence, 86 residues long: MAMTVKKDNNEVRIQWRVADIKIPTSEIKNISQDQNIHEVPKLDRDKVSRIGSTFGKTNRVIIDTDDHEYIIYTQNDQKVYNEVTK.

Belongs to the UPF0457 family.

The polypeptide is UPF0457 protein SSP0714 (Staphylococcus saprophyticus subsp. saprophyticus (strain ATCC 15305 / DSM 20229 / NCIMB 8711 / NCTC 7292 / S-41)).